A 360-amino-acid chain; its full sequence is Peptide chain release factor 1 (360 aa).

N5-methylglutamine is present on Gln-235. A disordered region spans residues Lys-285–Pro-313.

It belongs to the prokaryotic/mitochondrial release factor family. Methylated by PrmC. Methylation increases the termination efficiency of RF1.

It localises to the cytoplasm. Peptide chain release factor 1 directs the termination of translation in response to the peptide chain termination codons UAG and UAA. This is Peptide chain release factor 1 from Salmonella paratyphi A (strain ATCC 9150 / SARB42).